The following is a 607-amino-acid chain: Matrix metalloproteinase-16 (607 aa).

The first 31 residues, 1–31 (MILLTFSTGRRLDFVHHSGVFFLQTLLWILC), serve as a signal peptide directing secretion. A propeptide spanning residues 32–119 (ATVCGTEQYF…SSKFHIRRKR (88 aa)) is cleaved from the precursor. Asn-83 is a glycosylation site (N-linked (GlcNAc...) asparagine). A Cysteine switch motif is present at residues 99–106 (PRCGVPDQ). A Zn(2+)-binding site is contributed by Cys-101. Residues 120-564 (YALTGQKWQH…LDNTASTVKA (445 aa)) are Extracellular-facing. Asp-183 serves as a coordination point for Ca(2+). Zn(2+)-binding residues include His-193 and Asp-195. Asp-200, Gly-201, Gly-203, and Phe-205 together coordinate Ca(2+). His-208 serves as a coordination point for Zn(2+). Gly-215, Gly-217, and Asp-219 together coordinate Ca(2+). His-221 serves as a coordination point for Zn(2+). Ca(2+) contacts are provided by Asp-223 and Glu-226. His-246 is a binding site for Zn(2+). Residue Glu-247 is part of the active site. The Zn(2+) site is built by His-250 and His-256. Residues 281–340 (DDLQGIQKIYGPPDKIPPPTRPLPTVPPHRSIPPADPRKNDRPKPPRPPTGRPSYPGAKP) are disordered. Residues 294 to 315 (DKIPPPTRPLPTVPPHRSIPPA) show a composition bias toward pro residues. Hemopexin repeat units lie at residues 340–388 (PNIC…WRGL), 389–434 (PPSI…GSGI), 436–484 (PHGI…KGIP), and 485–532 (ESPQ…FMGC). Residues Cys-343 and Cys-532 are joined by a disulfide bond. A helical transmembrane segment spans residues 565–585 (IAIVIPCILALCLLVLVYTVF). The Cytoplasmic segment spans residues 586 to 607 (QFKRKGTPRHILYCKRSMQEWV).

The protein belongs to the peptidase M10A family. As to quaternary structure, interacts with CSPG4 through CSPG4 chondroitin sulfate glycosaminoglycan. The cofactor is Zn(2+). It depends on Ca(2+) as a cofactor. Post-translationally, the precursor is cleaved by a furin endopeptidase. Expressed in heart, brain, placenta, ovary and small intestine. Isoform Short is found in the ovary.

The protein resides in the cell membrane. It is found in the secreted. The protein localises to the extracellular space. It localises to the extracellular matrix. Its subcellular location is the cell surface. TIMP-2 shows little inhibitory activity compared to TIMP-1. TIMP-1 seems to have less binding affinity than TIMP-2 for the short isoform. Endopeptidase that degrades various components of the extracellular matrix, such as collagen type III and fibronectin. Activates progelatinase A. Involved in the matrix remodeling of blood vessels. Isoform short cleaves fibronectin and also collagen type III, but at lower rate. It has no effect on type I, II, IV and V collagen. However, upon interaction with CSPG4, it may be involved in degradation and invasion of type I collagen by melanoma cells. The polypeptide is Matrix metalloproteinase-16 (Homo sapiens (Human)).